We begin with the raw amino-acid sequence, 416 residues long: Histidine--tRNA ligase (416 aa).

Belongs to the class-II aminoacyl-tRNA synthetase family. As to quaternary structure, homodimer.

The protein resides in the cytoplasm. The catalysed reaction is tRNA(His) + L-histidine + ATP = L-histidyl-tRNA(His) + AMP + diphosphate + H(+). This chain is Histidine--tRNA ligase, found in Clostridium novyi (strain NT).